Consider the following 301-residue polypeptide: ATP synthase subunit gamma, mitochondrial (301 aa).

It belongs to the ATPase gamma chain family. As to quaternary structure, F-type ATPases have 2 components, CF(1) - the catalytic core - and CF(0) - the membrane proton channel. CF(1) has five subunits: alpha(3), beta(3), gamma(1), delta(1), epsilon(1). CF(0) has three main subunits: a, b and c.

Its subcellular location is the mitochondrion. It is found in the mitochondrion inner membrane. Functionally, mitochondrial membrane ATP synthase (F(1)F(0) ATP synthase or Complex V) produces ATP from ADP in the presence of a proton gradient across the membrane which is generated by electron transport complexes of the respiratory chain. F-type ATPases consist of two structural domains, F(1) - containing the extramembraneous catalytic core, and F(0) - containing the membrane proton channel, linked together by a central stalk and a peripheral stalk. During catalysis, ATP synthesis in the catalytic domain of F(1) is coupled via a rotary mechanism of the central stalk subunits to proton translocation. Part of the complex F(1) domain and the central stalk which is part of the complex rotary element. The gamma subunit protrudes into the catalytic domain formed of alpha(3)beta(3). Rotation of the central stalk against the surrounding alpha(3)beta(3) subunits leads to hydrolysis of ATP in three separate catalytic sites on the beta subunits. This chain is ATP synthase subunit gamma, mitochondrial (atp3), found in Schizosaccharomyces pombe (strain 972 / ATCC 24843) (Fission yeast).